A 201-amino-acid chain; its full sequence is Snake venom metalloproteinase trimerelysin-2 (201 aa).

Gln1 is subject to Pyrrolidone carboxylic acid. One can recognise a Peptidase M12B domain in the interval 6 to 201 (RYIELAIVVD…YNPQCILNAP (196 aa)). Asn72 is a glycosylation site (N-linked (GlcNAc...) asparagine). 3 cysteine pairs are disulfide-bonded: Cys117–Cys196, Cys158–Cys180, and Cys160–Cys163. His142 provides a ligand contact to Zn(2+). Glu143 is a catalytic residue. Zn(2+) contacts are provided by His146 and His152.

It belongs to the venom metalloproteinase (M12B) family. P-I subfamily. In terms of assembly, monomer. The cofactor is Zn(2+). As to expression, expressed by the venom gland.

The protein localises to the secreted. It catalyses the reaction Cleavage of 3-Asn-|-Gln-4, 10-His-|-Leu-11 and 14-Ala-|-Leu-15 in the insulin B chain, and the bond Z-Gly-Pro-|-Leu-Gly-Pro in a small molecule substrate of microbial collagenase.. Major venom non-hemorrhagic metalloproteinase. This is Snake venom metalloproteinase trimerelysin-2 from Protobothrops flavoviridis (Habu).